The sequence spans 690 residues: Probable xyloglucan glycosyltransferase 1 (690 aa).

The next 2 helical transmembrane spans lie at 120-140 (AFLL…AQGW) and 166-186 (LEYL…LFLI). The active site involves aspartate 272. Aspartate 331 and aspartate 333 together coordinate substrate. Aspartate 425 is a catalytic residue. The next 2 membrane-spanning stretches (helical) occupy residues 503-523 (LILP…TMFV) and 528-548 (LPAW…ILPA). The interval 607-637 (QPKQQRVGSAPNLDSLAKESHPKKDSKKKKH) is disordered. 2 helical membrane-spanning segments follow: residues 640 to 659 (IYQK…ARSL) and 665 to 685 (IHFY…LDLI).

It belongs to the glycosyltransferase 2 family. Plant cellulose synthase-like C subfamily.

The protein localises to the golgi apparatus membrane. In terms of biological role, probable beta-1,4-glucan synthase rather involved in the synthesis of the xyloglucan backbone than cellulose. Seems to work simultaneously with xyloglucan 6-xylosyltransferase. Xyloglucan is a noncellulosic polysaccharides of plant cell wall and consists of a glucan backbone substituted by xylose, galactose and fucose. The sequence is that of Probable xyloglucan glycosyltransferase 1 (CSLC1) from Oryza sativa subsp. japonica (Rice).